Here is a 120-residue protein sequence, read N- to C-terminus: MSKQPDKQRKSQRRAPLHERHKQVRATLSADLREEYGQRNVRVNAGDTVEVLRGDFAGEEGEVINVDLDKAVIHVEDVTLEKTDGEEVPRPLDTSNVRVTDLDLEDEKREARLESEDDSA.

The segment at 1–26 (MSKQPDKQRKSQRRAPLHERHKQVRA) is disordered. Basic residues predominate over residues 10 to 24 (KSQRRAPLHERHKQV).

This sequence belongs to the universal ribosomal protein uL24 family. In terms of assembly, part of the 50S ribosomal subunit. Interacts weakly with protein L4.

One of two assembly initiator proteins, it binds directly to the 5'-end of the 23S rRNA, where it nucleates assembly of the 50S subunit. Functionally, stabilizes the tertiary rRNA structure within the 23S rRNA domain (domain I) to which it binds. Located at the polypeptide exit tunnel on the outside of the subunit. This chain is Large ribosomal subunit protein uL24 (rpl24), found in Haloarcula marismortui (strain ATCC 43049 / DSM 3752 / JCM 8966 / VKM B-1809) (Halobacterium marismortui).